The chain runs to 593 residues: ETS-related transcription factor Elf-2 (593 aa).

The interval 1–34 (MASAVVDSGGSALELPSDGGENQEGGDTGPDCPA) is disordered. Ser-107 is modified (phosphoserine). The segment at 146 to 199 (VEVSTEESEPMDASPIPTSPDSHEPMKKKKVGRKPKTQQSPVSNGSPELGIKKK) is disordered. The segment covering 171 to 181 (MKKKKVGRKPK) has biased composition (basic residues). At Thr-182 the chain carries Phosphothreonine. A compositionally biased stretch (polar residues) spans 182–191 (TQQSPVSNGS). 2 positions are modified to phosphoserine: Ser-185 and Ser-191. Residues 208–290 (TYLWEFLLDL…EGQRLVYQFK (83 aa)) constitute a DNA-binding region (ETS). A disordered region spans residues 362 to 383 (TSPTHDGSSRSPTTTAPVSAAA). 2 positions are modified to phosphoserine: Ser-363 and Ser-372. Positions 370–383 (SRSPTTTAPVSAAA) are enriched in low complexity. Residue Thr-376 is modified to Phosphothreonine. A Phosphoserine modification is found at Ser-432. Arg-496 carries the omega-N-methylarginine modification. Thr-523 carries the phosphothreonine modification. A Glycyl lysine isopeptide (Lys-Gly) (interchain with G-Cter in SUMO2) cross-link involves residue Lys-538.

Belongs to the ETS family. Interacts with LIM domains of LMO2. Interacts via its N-terminal region with RUNX1. In terms of tissue distribution, expressed in all tissues examined. Highest levels in thymocytes and bone marrow.

The protein resides in the nucleus. In terms of biological role, probably transcriptionally activates the LYN and BLK promoters and acts synergistically with RUNX1 to transactivate the BLK promoter. This chain is ETS-related transcription factor Elf-2, found in Mus musculus (Mouse).